Reading from the N-terminus, the 254-residue chain is Nickel import ATP-binding protein NikD (254 aa).

Residues 2-241 (PQQIELRNIT…PKHTVTRSLV (240 aa)) form the ABC transporter domain. 36-43 (GGSGSGKS) provides a ligand contact to ATP.

It belongs to the ABC transporter superfamily. Nickel importer (TC 3.A.1.5.3) family. The complex is composed of two ATP-binding proteins (NikD and NikE), two transmembrane proteins (NikB and NikC) and a solute-binding protein (NikA).

Its subcellular location is the cell inner membrane. It carries out the reaction Ni(2+)(out) + ATP + H2O = Ni(2+)(in) + ADP + phosphate + H(+). Functionally, part of the ABC transporter complex NikABCDE involved in nickel import. Responsible for energy coupling to the transport system. In Shigella flexneri, this protein is Nickel import ATP-binding protein NikD.